A 221-amino-acid chain; its full sequence is 5-methylthioribulose-1-phosphate/5-deoxyribulose-1-phosphate aldolase (221 aa).

Residue glutamate 75 is the Proton donor/acceptor of the active site. Glutamate 75, histidine 94, histidine 96, and histidine 157 together coordinate Co(2+).

Belongs to the aldolase class II family. The cofactor is Co(2+).

The catalysed reaction is 5-(methylsulfanyl)-D-ribulose 1-phosphate = 2-(methylsulfanyl)acetaldehyde + dihydroxyacetone phosphate. It carries out the reaction 5-deoxy-D-ribulose 1-phosphate = dihydroxyacetone phosphate + acetaldehyde. It functions in the pathway amino-acid biosynthesis; L-methionine biosynthesis via salvage pathway. Functionally, uses 5-methylthioribulose-1-phosphate to yield 2-(methylthio)acetaldehyde and dihydroxyacetone phosphate. Can also use 5-deoxyribulose 1-phosphate to yield acetaldehyde and dihydroxyacetone phosphate. Part of a bifunctional DHAP-shunt salvage pathway for SAM by-products. This is 5-methylthioribulose-1-phosphate/5-deoxyribulose-1-phosphate aldolase from Rhodospirillum rubrum (strain ATCC 11170 / ATH 1.1.1 / DSM 467 / LMG 4362 / NCIMB 8255 / S1).